The chain runs to 95 residues: Aspartyl/glutamyl-tRNA(Asn/Gln) amidotransferase subunit C (95 aa).

This sequence belongs to the GatC family. Heterotrimer of A, B and C subunits.

The catalysed reaction is L-glutamyl-tRNA(Gln) + L-glutamine + ATP + H2O = L-glutaminyl-tRNA(Gln) + L-glutamate + ADP + phosphate + H(+). It carries out the reaction L-aspartyl-tRNA(Asn) + L-glutamine + ATP + H2O = L-asparaginyl-tRNA(Asn) + L-glutamate + ADP + phosphate + 2 H(+). In terms of biological role, allows the formation of correctly charged Asn-tRNA(Asn) or Gln-tRNA(Gln) through the transamidation of misacylated Asp-tRNA(Asn) or Glu-tRNA(Gln) in organisms which lack either or both of asparaginyl-tRNA or glutaminyl-tRNA synthetases. The reaction takes place in the presence of glutamine and ATP through an activated phospho-Asp-tRNA(Asn) or phospho-Glu-tRNA(Gln). This is Aspartyl/glutamyl-tRNA(Asn/Gln) amidotransferase subunit C from Methylorubrum populi (strain ATCC BAA-705 / NCIMB 13946 / BJ001) (Methylobacterium populi).